The sequence spans 391 residues: tRNA-specific 2-thiouridylase MnmA (391 aa).

Residues 9-16 (GMSGGVDS) and M35 contribute to the ATP site. Residues 95 to 97 (NPD) form an interaction with target base in tRNA region. Residue C100 is the Nucleophile of the active site. An intrachain disulfide couples C100 to C196. G124 is an ATP binding site. An interaction with tRNA region spans residues 146 to 148 (KDQ). Catalysis depends on C196, which acts as the Cysteine persulfide intermediate. The interaction with tRNA stretch occupies residues 308–309 (RY).

Belongs to the MnmA/TRMU family.

The protein localises to the cytoplasm. It catalyses the reaction S-sulfanyl-L-cysteinyl-[protein] + uridine(34) in tRNA + AH2 + ATP = 2-thiouridine(34) in tRNA + L-cysteinyl-[protein] + A + AMP + diphosphate + H(+). Catalyzes the 2-thiolation of uridine at the wobble position (U34) of tRNA, leading to the formation of s(2)U34. This chain is tRNA-specific 2-thiouridylase MnmA, found in Burkholderia cenocepacia (strain HI2424).